The sequence spans 351 residues: MKPELTIQLMDTHAGGDVSRIVTGGIDLLPGDTVRAQMEYLRDDADGLRKLLLEEPYGIPEMSVDLLVPATDPRAAAGYIIMEVMGYPIYSGSNTICTATAVLEAGIVPKQEGKQHFMLESPAGLVNIEAIVHDGVVEAVTCEGLPSYIHTYNASINVPGIGEVAYSVAYSGGFYALVDAKSLGFDLTLDEERELARTAHAIVEAIQAARGFSHYTLGDVGPLPFLHFMGPEEKVADGYYRSRSATYVHPGVICRSTTGTGTSARLALMNYEGRIQPGDKLETVSLRDTGFIGEFTTVETEGDYQVVKNSITGKSYVIAHSDIVVNCDDPMVDCDGLHHILSSRHPQRPAT.

This sequence belongs to the proline racemase family.

Functionally, displays neither proline racemase activity nor trans-4-hydroxy-L-proline (t4LHyp) epimerase activity nor t3LHyp dehydratase activity. The polypeptide is Protein Maqu_2141 (Marinobacter nauticus (strain ATCC 700491 / DSM 11845 / VT8) (Marinobacter aquaeolei)).